The following is a 286-amino-acid chain: ATP synthase gamma chain (286 aa).

The protein belongs to the ATPase gamma chain family. As to quaternary structure, F-type ATPases have 2 components, CF(1) - the catalytic core - and CF(0) - the membrane proton channel. CF(1) has five subunits: alpha(3), beta(3), gamma(1), delta(1), epsilon(1). CF(0) has three main subunits: a, b and c.

Its subcellular location is the cell inner membrane. Functionally, produces ATP from ADP in the presence of a proton gradient across the membrane. The gamma chain is believed to be important in regulating ATPase activity and the flow of protons through the CF(0) complex. The polypeptide is ATP synthase gamma chain (Shewanella sp. (strain MR-4)).